Consider the following 793-residue polypeptide: Calcium permeable stress-gated cation channel 1 (793 aa).

At 1–21 the chain is on the lumenal side; sequence MAFNGYGIFDSDPRKNPSSDL. A helical transmembrane segment spans residues 22 to 42; the sequence is RTQFWLAFLLGASACVFFCFF. Over 43–95 the chain is Cytoplasmic; it reads RKRWKVLYAPRTTIEGLNLPTLSSSYYKWLMDLVNIPDDVVQNCAGLDGYVFL. Residues 96-116 form a helical membrane-spanning segment; that stretch reads LFFKMGIKFLSFASLLGVLII. Residues 117–192 lie on the Lumenal side of the membrane; the sequence is MPVNKHFRGD…IPGLPQPGDG (76 aa). A helical membrane pass occupies residues 193-213; that stretch reads FLYLYVLFTYFISIFLLYVLF. Residues 214-444 are Cytoplasmic-facing; the sequence is SSTKSIADIR…HKFFQGWFIT (231 aa). The chain crosses the membrane as a helical span at residues 445–465; the sequence is LVTFMIILLWTVPVGAIAVFI. Topologically, residues 466-493 are lumenal; sequence NLDTIRRLWPELGRMIEDLPFLNSLLRT. Residues 494–514 traverse the membrane as a helical segment; that stretch reads FLPTLVYSLFISISPFLFRWL. The Cytoplasmic segment spans residues 515-534; the sequence is SSMQGLSSRAEEEIYAVGKN. A helical membrane pass occupies residues 535–555; the sequence is YAYLFVNFFLVYVIAGSTSIW. At 556–577 the chain is on the lumenal side; the sequence is ELAKDTTSFAHFLANRLPHQAQ. Residues 578-598 form a helical membrane-spanning segment; it reads FFIDLIVLQGIGMFPLKLIQL. At 599-646 the chain is on the cytoplasmic side; that stretch reads GKLSSYFVRRSFVPYSIASKKFETPDSFSVGIFLPQPMFIMLICLCYS. Residues 647–667 form a helical membrane-spanning segment; it reads IISPLILVFGLIYFIIGFLVY. Over 668-687 the chain is Lumenal; that stretch reads KYELIYQMEHPQHSTGELWS. The helical transmembrane segment at 688 to 708 threads the bilayer; the sequence is TIFLRMIFGCVIMQLTMMGLM. At 709-713 the chain is on the cytoplasmic side; it reads SLRKA. A helical membrane pass occupies residues 714-734; the sequence is YWLSTVIFPLLCFTVISAYNF. Residues 735–793 are Lumenal-facing; sequence STMIRSSMQFVSLYYIRTHQSNTLSSESESRNSESSGSYVHPGFDLSNEELPLIDLNTA. The segment at 759–778 is disordered; the sequence is SSESESRNSESSGSYVHPGF.

The protein belongs to the CSC1 (TC 1.A.17) family.

Its subcellular location is the vacuole membrane. Acts as an osmosensitive calcium-permeable cation channel. This chain is Calcium permeable stress-gated cation channel 1, found in Schizosaccharomyces pombe (strain 972 / ATCC 24843) (Fission yeast).